The following is a 162-amino-acid chain: Protein NrdI (162 aa).

This sequence belongs to the NrdI family.

In terms of biological role, probably involved in ribonucleotide reductase function. This Streptococcus pyogenes serotype M1 protein is Protein NrdI.